The primary structure comprises 507 residues: Histidine ammonia-lyase (507 aa).

Residues 145–147 (ASG) constitute a cross-link (5-imidazolinone (Ala-Gly)). 2,3-didehydroalanine (Ser) is present on S146.

Belongs to the PAL/histidase family. Post-translationally, contains an active site 4-methylidene-imidazol-5-one (MIO), which is formed autocatalytically by cyclization and dehydration of residues Ala-Ser-Gly.

It localises to the cytoplasm. The catalysed reaction is L-histidine = trans-urocanate + NH4(+). It functions in the pathway amino-acid degradation; L-histidine degradation into L-glutamate; N-formimidoyl-L-glutamate from L-histidine: step 1/3. The sequence is that of Histidine ammonia-lyase from Treponema denticola (strain ATCC 35405 / DSM 14222 / CIP 103919 / JCM 8153 / KCTC 15104).